The primary structure comprises 155 residues: 6,7-dimethyl-8-ribityllumazine synthase (155 aa).

Residues W24, 58–60 (AFE), and 82–84 (AVI) contribute to the 5-amino-6-(D-ribitylamino)uracil site. Position 87 to 88 (87 to 88 (GT)) interacts with (2S)-2-hydroxy-3-oxobutyl phosphate. H90 functions as the Proton donor in the catalytic mechanism. F115 lines the 5-amino-6-(D-ribitylamino)uracil pocket. Position 129 (R129) interacts with (2S)-2-hydroxy-3-oxobutyl phosphate.

The protein belongs to the DMRL synthase family. Forms an icosahedral capsid composed of 60 subunits, arranged as a dodecamer of pentamers.

It catalyses the reaction (2S)-2-hydroxy-3-oxobutyl phosphate + 5-amino-6-(D-ribitylamino)uracil = 6,7-dimethyl-8-(1-D-ribityl)lumazine + phosphate + 2 H2O + H(+). Its pathway is cofactor biosynthesis; riboflavin biosynthesis; riboflavin from 2-hydroxy-3-oxobutyl phosphate and 5-amino-6-(D-ribitylamino)uracil: step 1/2. Functionally, catalyzes the formation of 6,7-dimethyl-8-ribityllumazine by condensation of 5-amino-6-(D-ribitylamino)uracil with 3,4-dihydroxy-2-butanone 4-phosphate. This is the penultimate step in the biosynthesis of riboflavin. The chain is 6,7-dimethyl-8-ribityllumazine synthase from Teredinibacter turnerae (strain ATCC 39867 / T7901).